A 249-amino-acid polypeptide reads, in one-letter code: Small ribosomal subunit protein uS2 (249 aa).

It belongs to the universal ribosomal protein uS2 family.

This is Small ribosomal subunit protein uS2 from Acinetobacter baylyi (strain ATCC 33305 / BD413 / ADP1).